The chain runs to 240 residues: Purine nucleoside phosphorylase DeoD-type (240 aa).

Histidine 5 provides a ligand contact to a purine D-ribonucleoside. Residues glycine 21, arginine 25, arginine 44, and 88-91 (RVGS) contribute to the phosphate site. A purine D-ribonucleoside contacts are provided by residues 181–183 (EME) and 205–206 (SD). Aspartate 206 acts as the Proton donor in catalysis.

The protein belongs to the PNP/UDP phosphorylase family. As to quaternary structure, homohexamer; trimer of homodimers.

The enzyme catalyses a purine D-ribonucleoside + phosphate = a purine nucleobase + alpha-D-ribose 1-phosphate. It catalyses the reaction a purine 2'-deoxy-D-ribonucleoside + phosphate = a purine nucleobase + 2-deoxy-alpha-D-ribose 1-phosphate. Its function is as follows. Catalyzes the reversible phosphorolytic breakdown of the N-glycosidic bond in the beta-(deoxy)ribonucleoside molecules, with the formation of the corresponding free purine bases and pentose-1-phosphate. The polypeptide is Purine nucleoside phosphorylase DeoD-type (Enterobacter sp. (strain 638)).